The chain runs to 184 residues: NADH-quinone oxidoreductase subunit B (184 aa).

[4Fe-4S] cluster-binding residues include Cys-37, Cys-38, Cys-103, and Cys-132.

This sequence belongs to the complex I 20 kDa subunit family. In terms of assembly, NDH-1 is composed of 14 different subunits. Subunits NuoB, C, D, E, F, and G constitute the peripheral sector of the complex. [4Fe-4S] cluster serves as cofactor.

It is found in the cell membrane. It catalyses the reaction a quinone + NADH + 5 H(+)(in) = a quinol + NAD(+) + 4 H(+)(out). NDH-1 shuttles electrons from NADH, via FMN and iron-sulfur (Fe-S) centers, to quinones in the respiratory chain. The immediate electron acceptor for the enzyme in this species is believed to be a menaquinone. Couples the redox reaction to proton translocation (for every two electrons transferred, four hydrogen ions are translocated across the cytoplasmic membrane), and thus conserves the redox energy in a proton gradient. The polypeptide is NADH-quinone oxidoreductase subunit B (Rhodococcus opacus (strain B4)).